The sequence spans 146 residues: Prolactin-inducible protein homolog (146 aa).

An N-terminal signal peptide occupies residues 1–28; it reads MRLFQLLFRASPATLLLVLCLQLGANKA. Position 29 is a pyrrolidone carboxylic acid (Q29). 2 disulfides stabilise this stretch: C65–C91 and C89–C123. The N-linked (GlcNAc...) asparagine glycan is linked to N105.

This sequence belongs to the PIP family. In terms of assembly, monomer. Interacts with AZGP1.

The protein resides in the secreted. The polypeptide is Prolactin-inducible protein homolog (PIP) (Pan troglodytes (Chimpanzee)).